Consider the following 137-residue polypeptide: Basic phospholipase A2 beta-bungarotoxin A1 chain (137 aa).

An N-terminal signal peptide occupies residues Ala-1–Ala-9. The propeptide occupies Ala-10–Leu-17. 6 cysteine pairs are disulfide-bonded: Cys-44-Cys-136, Cys-46-Cys-62, Cys-61-Cys-117, Cys-68-Cys-110, Cys-78-Cys-103, and Cys-96-Cys-108. Ca(2+)-binding residues include Tyr-45, Gly-47, and Gly-49. Residue His-65 is part of the active site. Asp-66 is a Ca(2+) binding site. Residue Asp-111 is part of the active site.

It belongs to the phospholipase A2 family. Group I subfamily. D49 sub-subfamily. Heterodimer; disulfide-linked. The A chain has phospholipase A2 activity and the B chain shows homology with the basic protease inhibitors. Ca(2+) is required as a cofactor. In terms of tissue distribution, expressed by the venom gland.

The protein resides in the secreted. It catalyses the reaction a 1,2-diacyl-sn-glycero-3-phosphocholine + H2O = a 1-acyl-sn-glycero-3-phosphocholine + a fatty acid + H(+). Snake venom phospholipase A2 (PLA2) that shows presynaptic neurotoxicity. The A chain has phospholipase activity. PLA2 catalyzes the calcium-dependent hydrolysis of the 2-acyl groups in 3-sn-phosphoglycerides. The chain is Basic phospholipase A2 beta-bungarotoxin A1 chain from Bungarus candidus (Malayan krait).